A 156-amino-acid polypeptide reads, in one-letter code: MNINLTMIGQAIAFFIFVVFCMKYVWPPVIQALREREKKIADGLQAAEHAQKDLELAQEKVAKQLREAKQQAAEIIEQANKRANQMLEEAKDQARTEGERLITAAKAEIDQEKNRAKESLRAEVAALALAGAEKILETSVDAGAHSNMLDKLAAEL.

A helical membrane pass occupies residues 5–25; it reads LTMIGQAIAFFIFVVFCMKYV.

The protein belongs to the ATPase B chain family. F-type ATPases have 2 components, F(1) - the catalytic core - and F(0) - the membrane proton channel. F(1) has five subunits: alpha(3), beta(3), gamma(1), delta(1), epsilon(1). F(0) has three main subunits: a(1), b(2) and c(10-14). The alpha and beta chains form an alternating ring which encloses part of the gamma chain. F(1) is attached to F(0) by a central stalk formed by the gamma and epsilon chains, while a peripheral stalk is formed by the delta and b chains.

Its subcellular location is the cell inner membrane. F(1)F(0) ATP synthase produces ATP from ADP in the presence of a proton or sodium gradient. F-type ATPases consist of two structural domains, F(1) containing the extramembraneous catalytic core and F(0) containing the membrane proton channel, linked together by a central stalk and a peripheral stalk. During catalysis, ATP synthesis in the catalytic domain of F(1) is coupled via a rotary mechanism of the central stalk subunits to proton translocation. Functionally, component of the F(0) channel, it forms part of the peripheral stalk, linking F(1) to F(0). This chain is ATP synthase subunit b, found in Hahella chejuensis (strain KCTC 2396).